Reading from the N-terminus, the 489-residue chain is Glucose-1-phosphate adenylyltransferase small subunit, chloroplastic/amyloplastic (489 aa).

The transit peptide at 1–52 directs the protein to the chloroplast; that stretch reads ITVPSTSSKNLQNSLAFSSSSLSGDKIQTTSFLNRRYCRISSRAPIVVSPKA.

It belongs to the bacterial/plant glucose-1-phosphate adenylyltransferase family. Heterotetramer. Prominently expressed in the leaves. A lower level expression is seen in the roots.

It is found in the plastid. The protein localises to the chloroplast. Its subcellular location is the amyloplast. The enzyme catalyses alpha-D-glucose 1-phosphate + ATP + H(+) = ADP-alpha-D-glucose + diphosphate. It participates in glycan biosynthesis; starch biosynthesis. With respect to regulation, activated by 3'phosphoglycerate, inhibited by orthophosphate. Allosteric regulation. Functionally, this protein plays a role in synthesis of starch. It catalyzes the synthesis of the activated glycosyl donor, ADP-glucose from Glc-1-P and ATP. The chain is Glucose-1-phosphate adenylyltransferase small subunit, chloroplastic/amyloplastic (AGPB1) from Beta vulgaris (Sugar beet).